Consider the following 528-residue polypeptide: Putative ABC transporter ATP-binding protein MA_1418 (528 aa).

2 consecutive ABC transporter domains span residues 2 to 242 (IELR…TNLT) and 262 to 494 (ISVK…SDYK). ATP contacts are provided by residues 36–43 (GHSAAGKT) and 294–301 (GENGSGKT).

The protein belongs to the ABC transporter superfamily.

Its subcellular location is the cell membrane. In terms of biological role, probably part of an ABC transporter complex. Responsible for energy coupling to the transport system. The polypeptide is Putative ABC transporter ATP-binding protein MA_1418 (Methanosarcina acetivorans (strain ATCC 35395 / DSM 2834 / JCM 12185 / C2A)).